The following is a 483-amino-acid chain: NADH-quinone oxidoreductase subunit N (483 aa).

13 consecutive transmembrane segments (helical) span residues 11 to 31, 37 to 57, 82 to 100, 110 to 130, 164 to 184, 205 to 225, 239 to 259, 268 to 288, 301 to 321, 329 to 349, 372 to 392, 406 to 426, and 446 to 466; these read ALPE…DLFL, SLIY…TACT, LMMY…QYVS, FALT…QHFL, FVLG…LYGV, AVLV…LGAV, PTAV…AFMI, VLAI…ILIG, MLAY…MSAG, MFYI…MLLL, YAFL…TLGF, GFVG…FYYL, and PIDM…LGMF.

The protein belongs to the complex I subunit 2 family. NDH-1 is composed of 14 different subunits. Subunits NuoA, H, J, K, L, M, N constitute the membrane sector of the complex.

It localises to the cell inner membrane. The enzyme catalyses a quinone + NADH + 5 H(+)(in) = a quinol + NAD(+) + 4 H(+)(out). In terms of biological role, NDH-1 shuttles electrons from NADH, via FMN and iron-sulfur (Fe-S) centers, to quinones in the respiratory chain. The immediate electron acceptor for the enzyme in this species is believed to be ubiquinone. Couples the redox reaction to proton translocation (for every two electrons transferred, four hydrogen ions are translocated across the cytoplasmic membrane), and thus conserves the redox energy in a proton gradient. The sequence is that of NADH-quinone oxidoreductase subunit N from Methylovorus glucosotrophus (strain SIP3-4).